The sequence spans 415 residues: G2/mitotic-specific cyclin cig1 (415 aa).

Disordered regions lie at residues 54–74 (PTLIEGNNESSISSSTGDTFE) and 86–118 (EERSIRSTPKSIGDDDLENREGSFDAPEGILTH). Over residues 57–71 (IEGNNESSISSSTGD) the composition is skewed to low complexity. Ser96 bears the Phosphoserine mark.

It belongs to the cyclin family. Cyclin G subfamily.

Its function is as follows. Required for efficient passage of the G1/S transition. This is G2/mitotic-specific cyclin cig1 (cig1) from Schizosaccharomyces pombe (strain 972 / ATCC 24843) (Fission yeast).